A 508-amino-acid polypeptide reads, in one-letter code: RanBP-type and C3HC4-type zinc finger-containing protein 1 (508 aa).

Met-1 bears the N-acetylmethionine mark. The segment at 1 to 218 (MDEKTKKAEE…PGCEMCCRAR (218 aa)) is interaction with IRF3. The segment at 1–268 (MDEKTKKAEE…NYLQHVQLEQ (268 aa)) is interaction with TAB2. Ser-50 is subject to Phosphoserine. A Ubiquitin-like domain is found at 55–119 (IRLCVSVEDA…DQETLHSHGI (65 aa)). The interval 69 to 131 (VTIWLTVRPD…NGDGAYLYLL (63 aa)) is interaction with RNF31. The interval 163 to 191 (QSRGPLEPVLPKPRTNQEPGQPDAAPESP) is disordered. Residues 188-220 (PESPPVGWQCPGCTFINKPTRPGCEMCCRARPE) form a RanBP2-type zinc finger. Residues 231-259 (DEEERARLAGEEEALRQYQQRKQQQQEGN) are a coiled coil. Positions 276 to 504 (EPTECPVCYS…VNGIPCHPSC (229 aa)) are TRIAD supradomain. Zn(2+) contacts are provided by Cys-280, Cys-283, Cys-298, His-300, Cys-303, Cys-306, and Cys-321. An RING-type 1 zinc finger spans residues 280–330 (CPVCYSVLAPGEAVVLRECLHTFCRECLQGTIRNSQEAEVACPFIDSTYSC). Tyr-328 carries the phosphotyrosine modification. Cys-330, Cys-369, Cys-374, Cys-389, Cys-392, Cys-397, Cys-400, His-404, Cys-409, Cys-445, and Cys-448 together coordinate Zn(2+). The IBR-type zinc finger occupies 349 to 409 (QRFLDLGVSI…CKAIHEHMNC (61 aa)). An RING-type 2; atypical zinc finger spans residues 445 to 474 (CPQCRIVVQKKDGCDWIRCTVCHTEICWVT). Cys-458 is an active-site residue. Residues Cys-463 and Cys-466 each contribute to the Zn(2+) site.

This sequence belongs to the RBR family. Component of the LUBAC complex (linear ubiquitin chain assembly complex) which consists of SHARPIN, RBCK1 and RNF31. LUBAC has a MW of approximately 600 kDa suggesting a heteromultimeric assembly of its subunits. Interacts with beta-I-type (PRKCB1) and zeta-type protein kinase C (PRKCZ). Interacts with UBE2L3. Interacts with IREB2 only in iron-rich conditions. Associates with the TNF-R1 signaling complex (TNF-RSC) in a stimulation-dependent manner. Interacts with EYA1, TAB2, TAB3, MAP3K7 TRAF6 and RIPK1. Interacts with IRF3. Auto-ubiquitinated. Auto-ubiquitination leads to degradation by the proteasome. In terms of processing, phosphorylated. In vitro, phosphorylation inhibits auto-ubiquitination activity.

It catalyses the reaction [E2 ubiquitin-conjugating enzyme]-S-ubiquitinyl-L-cysteine + [acceptor protein]-L-lysine = [E2 ubiquitin-conjugating enzyme]-L-cysteine + [acceptor protein]-N(6)-ubiquitinyl-L-lysine.. The protein operates within protein modification; protein ubiquitination. In terms of biological role, E3 ubiquitin-protein ligase, which accepts ubiquitin from specific E2 ubiquitin-conjugating enzymes, such as UBE2L3/UBCM4, and then transfers it to substrates. Functions as an E3 ligase for oxidized IREB2 and both heme and oxygen are necessary for IREB2 ubiquitination. Promotes ubiquitination of TAB2 and IRF3 and their degradation by the proteasome. Component of the LUBAC complex which conjugates linear ('Met-1'-linked) polyubiquitin chains to substrates and plays a key role in NF-kappa-B activation and regulation of inflammation. LUBAC conjugates linear polyubiquitin to IKBKG and RIPK1 and is involved in activation of the canonical NF-kappa-B and the JNK signaling pathways. Linear ubiquitination mediated by the LUBAC complex interferes with TNF-induced cell death and thereby prevents inflammation. LUBAC is recruited to the TNF-R1 signaling complex (TNF-RSC) following polyubiquitination of TNF-RSC components by BIRC2 and/or BIRC3 and to conjugate linear polyubiquitin to IKBKG and possibly other components contributing to the stability of the complex. The LUBAC complex is also involved in innate immunity by conjugating linear polyubiquitin chains at the surface of bacteria invading the cytosol to form the ubiquitin coat surrounding bacteria. LUBAC is not able to initiate formation of the bacterial ubiquitin coat, and can only promote formation of linear polyubiquitins on pre-existing ubiquitin. The bacterial ubiquitin coat acts as an 'eat-me' signal for xenophagy and promotes NF-kappa-B activation. Together with OTULIN, the LUBAC complex regulates the canonical Wnt signaling during angiogenesis. Binds polyubiquitin of different linkage types. In Mus musculus (Mouse), this protein is RanBP-type and C3HC4-type zinc finger-containing protein 1 (Rbck1).